We begin with the raw amino-acid sequence, 299 residues long: Small ribosomal subunit biogenesis GTPase RsgA (299 aa).

In terms of domain architecture, CP-type G spans 73–232 (CSWLTRPQVA…VADTPGFNRP (160 aa)). GTP-binding positions include 122–125 (TKGD) and 174–182 (GPSGVGKSS). Residues C257, C262, H264, and C270 each contribute to the Zn(2+) site.

Belongs to the TRAFAC class YlqF/YawG GTPase family. RsgA subfamily. As to quaternary structure, monomer. Associates with 30S ribosomal subunit, binds 16S rRNA. The cofactor is Zn(2+).

It is found in the cytoplasm. One of several proteins that assist in the late maturation steps of the functional core of the 30S ribosomal subunit. Helps release RbfA from mature subunits. May play a role in the assembly of ribosomal proteins into the subunit. Circularly permuted GTPase that catalyzes slow GTP hydrolysis, GTPase activity is stimulated by the 30S ribosomal subunit. The protein is Small ribosomal subunit biogenesis GTPase RsgA of Parasynechococcus marenigrum (strain WH8102).